The chain runs to 1233 residues: STE20-like serine/threonine-protein kinase (1233 aa).

A Phosphoserine modification is found at S14. Residues 34–292 (WEIIGELGDG…TSQLLQHPFV (259 aa)) form the Protein kinase domain. ATP-binding positions include 40-48 (LGDGAFGKV) and K63. D155 (proton acceptor) is an active-site residue. Phosphothreonine is present on T183. S189 carries the phosphoserine modification. Positions 309 to 351 (AEVTEEVEDGKEEDEEEEAENALPIPANKRASSDLSIASSEED) are disordered. The segment covering 312-328 (TEEVEDGKEEDEEEEAE) has biased composition (acidic residues). Phosphoserine occurs at positions 340, 341, 344, 347, 348, 354, and 372. The segment covering 363-399 (VSERTEQSTSEDKFSNKILNEKPTTDGPEKAVDEHAS) has biased composition (basic and acidic residues). Disordered regions lie at residues 363 to 453 (VSER…ENNR), 498 to 650 (VSQE…SIEE), 663 to 761 (ALGS…SGDL), and 772 to 791 (AKDSGSVSLQETRRQKKTLK). Residues 432–441 (PDTQDQQTVD) show a composition bias toward polar residues. The span at 518-529 (LTKEETQEKLGK) shows a compositional bias: basic and acidic residues. S543, S561, and S566 each carry phosphoserine. The segment covering 598–607 (GGERVEDKQP) has biased composition (basic and acidic residues). Polar residues predominate over residues 619–630 (QLTSTSETTRAT). Residues S643, S647, and S666 each carry the phosphoserine modification. Residues 690-701 (AESQAPAASQPS) show a composition bias toward low complexity. The segment covering 746-761 (TDSGTGSTVENSSGDL) has biased composition (polar residues). Phosphoserine occurs at positions 775 and 777. A Phosphothreonine modification is found at T812. Position 816 is a phosphoserine (S816). Residues 824-1067 (LRRQELRELR…LKNRQTQERA (244 aa)) are a coiled coil. A UVR domain is found at 873–908 (DQEIENLEKQQKQTIERLEQEHTNRLRDEAKRIKGE). The tract at residues 944 to 963 (KRRKEELAQSQHAQEQEFVQ) is disordered. Residues 954 to 963 (QHAQEQEFVQ) show a composition bias toward low complexity. T1095 carries the phosphothreonine modification. Residues 1107–1181 (AAQEEKRQKN…ELKEWREKLR (75 aa)) are a coiled coil. A disordered region spans residues 1109 to 1129 (QEEKRQKNERMAQHQKHESQM).

Belongs to the protein kinase superfamily. STE Ser/Thr protein kinase family. STE20 subfamily. Proteolytically cleaved by caspase-3. Post-translationally, autophosphorylated. As to expression, ubiquitously expressed.

It localises to the cytoplasm. It catalyses the reaction L-seryl-[protein] + ATP = O-phospho-L-seryl-[protein] + ADP + H(+). The enzyme catalyses L-threonyl-[protein] + ATP = O-phospho-L-threonyl-[protein] + ADP + H(+). Functionally, mediates apoptosis and actin stress fiber dissolution. The sequence is that of STE20-like serine/threonine-protein kinase (Slk) from Mus musculus (Mouse).